Consider the following 146-residue polypeptide: Hemoglobin subunit beta-2 (146 aa).

Positions 2-146 constitute a Globin domain; sequence EWTDFERATI…VVSSLGRQYH (145 aa). Residues His63 and His92 each coordinate heme b.

The protein belongs to the globin family. In terms of assembly, hb 2 is a heterotetramer of two alpha-2 and two beta-2 chains. As to expression, red blood cells.

Functionally, involved in oxygen transport from gills to the various peripheral tissues. This Gobionotothen gibberifrons (Humped rockcod) protein is Hemoglobin subunit beta-2 (hbb2).